Here is a 326-residue protein sequence, read N- to C-terminus: Eukaryotic translation initiation factor 3 subunit I (326 aa).

5 WD repeats span residues G8 to T47, G50 to S89, M145 to D184, D188 to T227, and G285 to E326.

It belongs to the eIF-3 subunit I family. Component of the eukaryotic translation initiation factor 3 (eIF-3) complex. The eIF-3 complex interacts with pix.

The protein localises to the cytoplasm. Functionally, component of the eukaryotic translation initiation factor 3 (eIF-3) complex, which is involved in protein synthesis of a specialized repertoire of mRNAs and, together with other initiation factors, stimulates binding of mRNA and methionyl-tRNAi to the 40S ribosome. The eIF-3 complex specifically targets and initiates translation of a subset of mRNAs involved in cell proliferation. The protein is Eukaryotic translation initiation factor 3 subunit I of Drosophila grimshawi (Hawaiian fruit fly).